We begin with the raw amino-acid sequence, 266 residues long: Calpain small subunit 1 (266 aa).

Met1 is subject to N-acetylmethionine. At Ser6 the chain carries Phosphoserine. An EF-hand 1; atypical domain is found at 94–128 (EEVRQFRRLFAQLAGDDMEVSATELMNILNKVVTR). Ca(2+) is bound by residues Ala107, Asp110, Glu112, Glu117, Asp135, Asp150, Asp152, Thr154, Lys156, and Glu161. EF-hand domains follow at residues 137–170 (FGIDTCRSMVAVMDSDTTGKLGFEEFKYLWNNIK), 167–202 (NNIKKWQAIYKQFDVDRSGTIGSSELPGAFEAAGFH), 203–231 (LNEHLYSMIIRRYSDEGGNMDFDNFISCL), and 232–266 (VRLDAMFRAFKSLDKDGTGQIQVNIQEWLQLTMYS). Lys177 carries the N6-acetyllysine modification. Ca(2+)-binding residues include Asp180, Asp182, Ser184, Thr186, Glu191, and Asp223.

In terms of assembly, homodimer or heterodimer of a large (catalytic) and a small (regulatory) subunit. In presence of calcium, the heterodimer dissociates.

Its subcellular location is the cytoplasm. The protein resides in the cell membrane. Regulatory subunit of the calcium-regulated non-lysosomal thiol-protease which catalyzes limited proteolysis of substrates involved in cytoskeletal remodeling and signal transduction. Essential for embryonic development. The polypeptide is Calpain small subunit 1 (CAPNS1) (Sus scrofa (Pig)).